The sequence spans 351 residues: Transaldolase (351 aa).

K138 (schiff-base intermediate with substrate) is an active-site residue.

The protein belongs to the transaldolase family. Type 2 subfamily.

The protein localises to the cytoplasm. The enzyme catalyses D-sedoheptulose 7-phosphate + D-glyceraldehyde 3-phosphate = D-erythrose 4-phosphate + beta-D-fructose 6-phosphate. It participates in carbohydrate degradation; pentose phosphate pathway; D-glyceraldehyde 3-phosphate and beta-D-fructose 6-phosphate from D-ribose 5-phosphate and D-xylulose 5-phosphate (non-oxidative stage): step 2/3. Transaldolase is important for the balance of metabolites in the pentose-phosphate pathway. The sequence is that of Transaldolase from Neisseria gonorrhoeae (strain ATCC 700825 / FA 1090).